A 400-amino-acid chain; its full sequence is Enoyl-[acyl-carrier-protein] reductase [NADH] (400 aa).

Residues 48-53 (GASTGY), 74-75 (FE), 111-112 (DA), and 139-140 (LA) contribute to the NAD(+) site. Substrate is bound at residue Tyr-225. Tyr-235 (proton donor) is an active-site residue. Residues Lys-244 and 273 to 275 (VVT) contribute to the NAD(+) site.

It belongs to the TER reductase family. In terms of assembly, monomer.

The catalysed reaction is a 2,3-saturated acyl-[ACP] + NAD(+) = a (2E)-enoyl-[ACP] + NADH + H(+). The protein operates within lipid metabolism; fatty acid biosynthesis. Involved in the final reduction of the elongation cycle of fatty acid synthesis (FAS II). Catalyzes the reduction of a carbon-carbon double bond in an enoyl moiety that is covalently linked to an acyl carrier protein (ACP). In Burkholderia ambifaria (strain ATCC BAA-244 / DSM 16087 / CCUG 44356 / LMG 19182 / AMMD) (Burkholderia cepacia (strain AMMD)), this protein is Enoyl-[acyl-carrier-protein] reductase [NADH].